The sequence spans 423 residues: Gamma-glutamyl phosphate reductase (423 aa).

Belongs to the gamma-glutamyl phosphate reductase family.

Its subcellular location is the cytoplasm. It carries out the reaction L-glutamate 5-semialdehyde + phosphate + NADP(+) = L-glutamyl 5-phosphate + NADPH + H(+). Its pathway is amino-acid biosynthesis; L-proline biosynthesis; L-glutamate 5-semialdehyde from L-glutamate: step 2/2. In terms of biological role, catalyzes the NADPH-dependent reduction of L-glutamate 5-phosphate into L-glutamate 5-semialdehyde and phosphate. The product spontaneously undergoes cyclization to form 1-pyrroline-5-carboxylate. This chain is Gamma-glutamyl phosphate reductase, found in Paraburkholderia xenovorans (strain LB400).